Consider the following 149-residue polypeptide: Oligosaccharyltransferase complex subunit ostc (149 aa).

Residues methionine 1–threonine 32 lie on the Cytoplasmic side of the membrane. Residues valine 33–isoleucine 53 traverse the membrane as a helical segment. Residues valine 54–tyrosine 83 lie on the Extracellular side of the membrane. A helical membrane pass occupies residues isoleucine 84–leucine 104. Over aspartate 105–arginine 117 the chain is Cytoplasmic. A helical transmembrane segment spans residues phenylalanine 118 to phenylalanine 138. The Extracellular portion of the chain corresponds to methionine 139–glycine 149.

This sequence belongs to the OSTC family. As to quaternary structure, specific component of the STT3A-containing form of the oligosaccharyltransferase (OST) complex.

The protein resides in the membrane. Its pathway is protein modification; protein glycosylation. In terms of biological role, specific component of the STT3A-containing form of the oligosaccharyl transferase (OST) complex that catalyzes the initial transfer of a defined glycan (Glc(3)Man(9)GlcNAc(2) in eukaryotes) from the lipid carrier dolichol-pyrophosphate to an asparagine residue within an Asn-X-Ser/Thr consensus motif in nascent polypeptide chains, the first step in protein N-glycosylation. N-glycosylation occurs cotranslationally and the complex associates with the Sec61 complex at the channel-forming translocon complex that mediates protein translocation across the endoplasmic reticulum (ER). All subunits are required for a maximal enzyme activity. This Danio rerio (Zebrafish) protein is Oligosaccharyltransferase complex subunit ostc.